Reading from the N-terminus, the 399-residue chain is Vitamin K-dependent protein Z (399 aa).

An N-terminal signal peptide occupies residues 1-22 (MAGCILLLRGFILTLILHQVEL). Residues 23-40 (SVFLPAPKANNVLRRWRR) constitute a propeptide that is removed on maturation. In terms of domain architecture, Gla spans 41–86 (GSSYFLEEIFQGNLEKECYEEVCNYEEAREVFENDVITDEFWRQYG). Glu47, Glu48, Glu55, Glu57, Glu60, Glu61, Glu66, Glu67, Glu70, Glu73, and Glu80 each carry 4-carboxyglutamate. A disulfide bond links Cys58 and Cys63. 2 consecutive EGF-like domains span residues 87 to 123 (GGSP…KTCA) and 125 to 166 (AKNE…KSCG). 7 disulfide bridges follow: Cys91/Cys102, Cys96/Cys111, Cys113/Cys122, Cys129/Cys141, Cys137/Cys150, Cys152/Cys165, and Cys208/Cys224. Asn99 is a glycosylation site (N-linked (GlcNAc...) asparagine). A (3R)-3-hydroxyaspartate modification is found at Asp104. The Peptidase S1 domain maps to 172 to 399 (ACGALTSEHI…YSMWFKQIMK (228 aa)). Asn230, Asn305, and Asn331 each carry an N-linked (GlcNAc...) asparagine glycan. Cysteines 326 and 340 form a disulfide.

The protein belongs to the peptidase S1 family. In terms of processing, the iron and 2-oxoglutarate dependent 3-hydroxylation of aspartate and asparagine is (R) stereospecific within EGF domains. In terms of tissue distribution, plasma.

It localises to the secreted. Its function is as follows. Appears to assist hemostasis by binding thrombin and promoting its association with phospholipid vesicles. Inhibits activity of the coagulation protease factor Xa in the presence of SERPINA10, calcium and phospholipids. The sequence is that of Vitamin K-dependent protein Z (Proz) from Mus musculus (Mouse).